The primary structure comprises 324 residues: Acetyl-coenzyme A carboxylase carboxyl transferase subunit alpha (324 aa).

The CoA carboxyltransferase C-terminal domain occupies 44 to 298 (QLEAKATQLR…KTAIVKSLDD (255 aa)).

This sequence belongs to the AccA family. Acetyl-CoA carboxylase is a heterohexamer composed of biotin carboxyl carrier protein (AccB), biotin carboxylase (AccC) and two subunits each of ACCase subunit alpha (AccA) and ACCase subunit beta (AccD).

It localises to the cytoplasm. It carries out the reaction N(6)-carboxybiotinyl-L-lysyl-[protein] + acetyl-CoA = N(6)-biotinyl-L-lysyl-[protein] + malonyl-CoA. It participates in lipid metabolism; malonyl-CoA biosynthesis; malonyl-CoA from acetyl-CoA: step 1/1. In terms of biological role, component of the acetyl coenzyme A carboxylase (ACC) complex. First, biotin carboxylase catalyzes the carboxylation of biotin on its carrier protein (BCCP) and then the CO(2) group is transferred by the carboxyltransferase to acetyl-CoA to form malonyl-CoA. This is Acetyl-coenzyme A carboxylase carboxyl transferase subunit alpha from Trichodesmium erythraeum (strain IMS101).